A 693-amino-acid polypeptide reads, in one-letter code: TGF-beta-activated kinase 1 and MAP3K7-binding protein 2 (693 aa).

One can recognise a CUE domain in the interval isoleucine 8–threonine 51. The tract at residues histidine 90–threonine 171 is disordered. 3 stretches are compositionally biased toward polar residues: residues valine 97–proline 130, proline 143–proline 153, and lysine 162–threonine 171. Position 173 is an asymmetric dimethylarginine (arginine 173). The span at serine 223–histidine 282 shows a compositional bias: polar residues. Residues serine 223 to serine 310 are disordered. Positions proline 286–serine 310 are enriched in low complexity. A Glycyl lysine isopeptide (Lys-Gly) (interchain with G-Cter in SUMO) cross-link involves residue lysine 329. The disordered stretch occupies residues leucine 330–isoleucine 380. The span at glutamine 334–threonine 366 shows a compositional bias: polar residues. Phosphoserine is present on residues serine 372, serine 450, serine 482, and serine 524. Positions tyrosine 532–arginine 619 form a coiled coil. A Glycyl lysine isopeptide (Lys-Gly) (interchain with G-Cter in SUMO) cross-link involves residue lysine 562. At serine 582 the chain carries Phosphoserine. Lysine 611 is covalently cross-linked (Glycyl lysine isopeptide (Lys-Gly) (interchain with G-Cter in ubiquitin)). Residues proline 640–glutamate 663 are disordered. The RanBP2-type zinc-finger motif lies at glutamate 663–phenylalanine 693. The tract at residues phenylalanine 675–glutamate 685 is interaction with polyubiquitin.

As to quaternary structure, interacts with MAP3K7 and TRAF6. Identified in the TRIKA2 complex composed of MAP3K7, TAB1 and TAB2. Binds 'Lys-63'-linked polyubiquitin chains. Interacts with NCOR1 and HDAC3 to form a ternary complex. Interacts (via C-terminal) with NUMBL (via PTB domain). Interacts (via the C-terminus) with DYNC2I2 (via WD domains). Interacts with RBCK1. Interacts with TRIM5. Interacts with TRIM38 (via B30.2/SPRY domain), leading to its translocation to lysosomes and degradation. Interacts with ASB1; this interaction promotes TAB2 stability. Post-translationally, SUMOylated by TRIM60; leading to inhibition of MAPK/NF-kappaB activation and the innate immune response. In terms of processing, ubiquitinated; following IL1 stimulation or TRAF6 overexpression. Ubiquitination involves RBCK1 leading to proteasomal degradation. Ubiquitinated at Lys-611 by TRIM45 leading to proteasomal degradation. Degraded in a lysosome-dependent manner following interaction with TRIM38. Post-translationally, phosphorylated. As to expression, widely expressed.

The protein resides in the membrane. It localises to the endosome membrane. It is found in the lysosome membrane. Its subcellular location is the cytoplasm. The protein localises to the cytosol. The protein resides in the nucleus. Functionally, adapter required to activate the JNK and NF-kappa-B signaling pathways through the specific recognition of 'Lys-63'-linked polyubiquitin chains by its RanBP2-type zinc finger (NZF). Acts as an adapter linking MAP3K7/TAK1 and TRAF6 to 'Lys-63'-linked polyubiquitin chains. The RanBP2-type zinc finger (NZF) specifically recognizes Lys-63'-linked polyubiquitin chains unanchored or anchored to the substrate proteins such as RIPK1/RIP1 and RIPK2: this acts as a scaffold to organize a large signaling complex to promote autophosphorylation of MAP3K7/TAK1, and subsequent activation of I-kappa-B-kinase (IKK) core complex by MAP3K7/TAK1. Also recognizes and binds Lys-63'-linked polyubiquitin chains of heterotypic 'Lys-63'-/'Lys-48'-linked branched ubiquitin chains. Regulates the IL1-mediated translocation of NCOR1 out of the nucleus. Involved in heart development. This is TGF-beta-activated kinase 1 and MAP3K7-binding protein 2 (Tab2) from Mus musculus (Mouse).